We begin with the raw amino-acid sequence, 549 residues long: MAKQLVFDEAARRSLERGVNAVANAVKVTLGPRGRNVVIEKKFGSPTITKDGVTVAKEVELEDKLENIGAQLLKEVASKTNDITGDGTTTATVLGQAIVKEGLRNVAAGANPLALKRGIEKAVAAAIVEIQNLAVPVEDSDAIKKVAGISANDDQVGEEIASAMDKVGKEGVITIEESKGFDTEVDVVEGMQFDKGFINPYFVTNPEKMEAVLEDAYILINEKKISNLKDLLPVLEKVAQTGRPLLIIAEDVEGEALATLVVNKLRGTLNIAAVKAPGFGDRRKEMLRDIAAVTGGEVVSEDLGHKLENTGMEMLGRAARIRITKDETTIVDGKGEQAQIDARVNAIKGELDTTDSDYAREKLQERLAKLSGGVAVIRVGAATETELKEKKHRYEDALSTARSAVEEGIVAGGGTTLLRIIPAVRKAAEGLQGDEATGARILIRALEEPARQIAVNAGEEGSVIVNAVINSDKPRYGFNAATGEYVDDMVAAGIVDPAKVTRTALQNAASIGALILTTEAIVSDKPEKPQQGGQGGGGMGGGDMGGMDF.

Residues 29-32 (TLGP), lysine 50, 86-90 (DGTTT), glycine 413, 479-481 (NAA), and aspartate 496 contribute to the ATP site. Residues 522-549 (VSDKPEKPQQGGQGGGGMGGGDMGGMDF) are disordered. Over residues 532 to 549 (GGQGGGGMGGGDMGGMDF) the composition is skewed to gly residues.

Belongs to the chaperonin (HSP60) family. Forms a cylinder of 14 subunits composed of two heptameric rings stacked back-to-back. Interacts with the co-chaperonin GroES.

The protein resides in the cytoplasm. The catalysed reaction is ATP + H2O + a folded polypeptide = ADP + phosphate + an unfolded polypeptide.. Its function is as follows. Together with its co-chaperonin GroES, plays an essential role in assisting protein folding. The GroEL-GroES system forms a nano-cage that allows encapsulation of the non-native substrate proteins and provides a physical environment optimized to promote and accelerate protein folding. The protein is Chaperonin GroEL of Deinococcus deserti (strain DSM 17065 / CIP 109153 / LMG 22923 / VCD115).